Reading from the N-terminus, the 130-residue chain is Small ribosomal subunit protein uS9 (130 aa).

The tract at residues Arg109–Arg130 is disordered. The span at Lys111–Arg130 shows a compositional bias: basic residues.

This sequence belongs to the universal ribosomal protein uS9 family.

This is Small ribosomal subunit protein uS9 from Listeria innocua serovar 6a (strain ATCC BAA-680 / CLIP 11262).